The sequence spans 3214 residues: Ciliogenesis and planar polarity effector 1 (3214 aa).

Transmembrane regions (helical) follow at residues 593-613 (KLML…LQFI) and 632-652 (AWVL…YWDM). Disordered regions lie at residues 1496-1523 (VGKK…ETPG), 1644-1667 (GNQS…PLQS), 1879-1991 (DGRH…HRAQ), 2047-2142 (FGES…FPPA), 2214-2241 (SLSD…SSHC), 2398-2440 (GITQ…ISND), 2491-2529 (GSHD…GHEP), 2622-2650 (TFQS…QSGE), 2824-2855 (VSLQ…HSSQ), 3037-3127 (TAPA…CRED), and 3158-3181 (MSPA…VSES). Basic and acidic residues predominate over residues 1512–1523 (NSQRKEDDETPG). Residues 1932 to 1942 (QCSRKEPRDAS) show a composition bias toward basic and acidic residues. Polar residues-rich tracts occupy residues 1943 to 1953 (VDTNLTEQKGA), 1971 to 1984 (NGAQ…QKTQ), and 2047 to 2068 (FGES…SRQR). Residues 2079–2099 (CTREPGKNSPADHKRISRPDQ) show a composition bias toward basic and acidic residues. Polar residues predominate over residues 2215–2241 (LSDSCQPPVSQRTVHTTLPSPSDSSHC). Basic and acidic residues predominate over residues 2500–2514 (DPDKEGPSQKADSES). Composition is skewed to polar residues over residues 2515-2524 (SKNPQATAAS) and 2622-2634 (TFQS…STRG). The span at 2830 to 2848 (EDVEEQKDAEETSETEFSE) shows a compositional bias: acidic residues. The span at 3090–3107 (RGSSQLRGSQPPCQSQKP) shows a compositional bias: polar residues.

In terms of assembly, interacts with FUZ; INTU and WDPCP; the interactors are proposed to form the core CPLANE (ciliogenesis and planar polarity effectors) complex.

Its subcellular location is the membrane. The protein resides in the cell projection. The protein localises to the cilium. Functionally, involved in ciliogenesis. Involved in the establishment of cell polarity required for directional cell migration. Proposed to act in association with the CPLANE (ciliogenesis and planar polarity effectors) complex. Involved in recruitment of peripheral IFT-A proteins to basal bodies. The chain is Ciliogenesis and planar polarity effector 1 from Mus musculus (Mouse).